Consider the following 369-residue polypeptide: Leucine-specific-binding protein (369 aa).

The N-terminal stretch at 1 to 23 (MKRKAKTIIAGIVALAVSQGAMA) is a signal peptide. A disulfide bridge links C76 with C101.

Belongs to the leucine-binding protein family.

It localises to the periplasm. This protein is a component of the leucine-specific transport system, which is one of the two periplasmic binding protein-dependent transport systems of the high-affinity transport of the branched-chain amino acids. The sequence is that of Leucine-specific-binding protein (livK) from Salmonella typhi.